Consider the following 261-residue polypeptide: Neurexophilin-2 (261 aa).

Residues M1–S22 form the signal peptide. An II region spans residues E23–I87. N83, N136, N146, and N152 each carry an N-linked (GlcNAc...) asparagine glycan. Positions Q88–F166 are III. The IV (linker domain) stretch occupies residues E167–E175. The segment at T176–G261 is v (Cys-rich).

The protein belongs to the neurexophilin family. May be proteolytically processed at the boundary between the N-terminal non-conserved and the central conserved domain in neuron-like cells.

The protein localises to the secreted. In terms of biological role, may be signaling molecules that resemble neuropeptides and that act by binding to alpha-neurexins and possibly other receptors. The protein is Neurexophilin-2 (Nxph2) of Mus musculus (Mouse).